The following is a 387-amino-acid chain: Patatin-12 (387 aa).

An N-terminal signal peptide occupies residues 1 to 23 (MATTKSFLILIVMILATTSSTFA). The PNPLA domain maps to 32-230 (LSIDGGGIKG…TVGDPALLSL (199 aa)). Positions 36–41 (GGGIKG) match the GXGXXG motif. A GXSXG motif is present at residues 75–79 (GTSTG). The active-site Nucleophile is the Ser-77. The N-linked (GlcNAc...) asparagine glycan is linked to Asn-115. Residue Asp-216 is the Proton acceptor of the active site. The short motif at 216-218 (DGG) is the DGA/G element. A coiled-coil region spans residues 322-385 (ENALTGTTTE…DRKKLRANKA (64 aa)).

This sequence belongs to the patatin family. As to expression, tuber.

Its subcellular location is the vacuole. Functionally, probable lipolytic acyl hydrolase (LAH), an activity which is thought to be involved in the response of tubers to pathogens. This is Patatin-12 from Solanum tuberosum (Potato).